A 377-amino-acid chain; its full sequence is Transcription factor ast-1 (377 aa).

The interval Pro-72–Ser-143 is disordered. 2 stretches are compositionally biased toward low complexity: residues Ser-96–Lys-109 and Thr-118–Glu-142. The segment at residues Thr-214–Asp-294 is a DNA-binding region (ETS).

Belongs to the ETS family. As to expression, expressed in the A-neurons in the male-specific genital sensilla (simple sense organs) known as rays.

It is found in the nucleus. Its subcellular location is the cell projection. It localises to the neuron projection. Functionally, transcription factor. Probably binds to DNA sequences containing the consensus motif 5'-CGGA[AT][AG]-3'. Positively modulates expression of dopamine pathway genes, acting as a terminal selector for differentiation of dopaminergic neurons; may act in concert with homeobox proteins ceh-40, ceh-43 and ceh-20. Required for axon navigation in some interneurons, perhaps acting in the same pathways as basement membrane protein nid-1 and unc-6/netrin. Plays a role in the differentiation of the ventral cord pioneer neuron AVG. Required for morphogenesis of the pharynx. This is Transcription factor ast-1 from Caenorhabditis elegans.